A 267-amino-acid polypeptide reads, in one-letter code: tRNA-cytidine(32) 2-sulfurtransferase 1 (267 aa).

The PP-loop motif signature appears at 42–47 (SGGKDS). [4Fe-4S] cluster contacts are provided by Cys117, Cys120, and Cys208.

This sequence belongs to the TtcA family. In terms of assembly, homodimer. It depends on Mg(2+) as a cofactor. [4Fe-4S] cluster serves as cofactor.

It is found in the cytoplasm. It catalyses the reaction cytidine(32) in tRNA + S-sulfanyl-L-cysteinyl-[cysteine desulfurase] + AH2 + ATP = 2-thiocytidine(32) in tRNA + L-cysteinyl-[cysteine desulfurase] + A + AMP + diphosphate + H(+). Its pathway is tRNA modification. Catalyzes the ATP-dependent 2-thiolation of cytidine in position 32 of tRNA, to form 2-thiocytidine (s(2)C32). The sulfur atoms are provided by the cysteine/cysteine desulfurase (IscS) system. This chain is tRNA-cytidine(32) 2-sulfurtransferase 1, found in Francisella tularensis subsp. tularensis (strain FSC 198).